The primary structure comprises 414 residues: ATP-dependent Clp protease ATP-binding subunit ClpX (414 aa).

Residues 1–51 form the ClpX-type ZB domain; sequence MADSKTKKKCSFCGRSENEVGFLITGMNGYICDSCATQAYEITQEALGEGR. Residues cysteine 10, cysteine 13, cysteine 32, and cysteine 35 each contribute to the Zn(2+) site. 120–127 lines the ATP pocket; that stretch reads STGTGKTL.

It belongs to the ClpX chaperone family. As to quaternary structure, component of the ClpX-ClpP complex. Forms a hexameric ring that, in the presence of ATP, binds to fourteen ClpP subunits assembled into a disk-like structure with a central cavity, resembling the structure of eukaryotic proteasomes.

Functionally, ATP-dependent specificity component of the Clp protease. It directs the protease to specific substrates. Can perform chaperone functions in the absence of ClpP. The protein is ATP-dependent Clp protease ATP-binding subunit ClpX of Bacteroides thetaiotaomicron (strain ATCC 29148 / DSM 2079 / JCM 5827 / CCUG 10774 / NCTC 10582 / VPI-5482 / E50).